Here is a 323-residue protein sequence, read N- to C-terminus: Mitochondrial glutamate carrier 1 (323 aa).

3 Solcar repeats span residues Ile-6–Gln-93, Leu-101–Leu-214, and Ser-223–Glu-312. 6 consecutive transmembrane segments (helical) span residues Leu-12–Ala-32, Tyr-62–Ile-82, Met-107–Leu-127, Gly-189–Ala-209, Ser-223–Val-243, and Ala-292–Glu-312.

This sequence belongs to the mitochondrial carrier (TC 2.A.29) family. In terms of tissue distribution, detected in insulin-secreting beta-cells and pancreatic islets (at the protein level).

The protein resides in the mitochondrion inner membrane. It carries out the reaction L-glutamate(in) + H(+)(in) = L-glutamate(out) + H(+)(out). Its function is as follows. Mitochondrial glutamate/H(+) symporter. Responsible for the transport of glutamate from the cytosol into the mitochondrial matrix with the concomitant import of a proton. Plays a role in the control of glucose-stimulated insulin secretion. This chain is Mitochondrial glutamate carrier 1, found in Rattus norvegicus (Rat).